A 43-amino-acid chain; its full sequence is Cytin chain A (43 aa).

The protein belongs to the protease inhibitor I13 (potato type I serine protease inhibitor) family. In terms of assembly, heterodimer of an A chain and a B chain, linked by a disulfide bond.

Inhibitor of chymotrypsin. This is Cytin chain A from Theromyzon tessulatum (Duck leech).